We begin with the raw amino-acid sequence, 206 residues long: Thiamine-phosphate synthase (206 aa).

4-amino-2-methyl-5-(diphosphooxymethyl)pyrimidine is bound by residues 36-40 and Asn68; that span reads QLRMK. Residues Asp69 and Asp88 each coordinate Mg(2+). Residue Ser106 coordinates 4-amino-2-methyl-5-(diphosphooxymethyl)pyrimidine. Position 132–134 (132–134) interacts with 2-[(2R,5Z)-2-carboxy-4-methylthiazol-5(2H)-ylidene]ethyl phosphate; that stretch reads TNT. Lys135 is a 4-amino-2-methyl-5-(diphosphooxymethyl)pyrimidine binding site. 2-[(2R,5Z)-2-carboxy-4-methylthiazol-5(2H)-ylidene]ethyl phosphate is bound by residues Gly162 and 182 to 183; that span reads VS.

The protein belongs to the thiamine-phosphate synthase family. It depends on Mg(2+) as a cofactor.

The enzyme catalyses 2-[(2R,5Z)-2-carboxy-4-methylthiazol-5(2H)-ylidene]ethyl phosphate + 4-amino-2-methyl-5-(diphosphooxymethyl)pyrimidine + 2 H(+) = thiamine phosphate + CO2 + diphosphate. It carries out the reaction 2-(2-carboxy-4-methylthiazol-5-yl)ethyl phosphate + 4-amino-2-methyl-5-(diphosphooxymethyl)pyrimidine + 2 H(+) = thiamine phosphate + CO2 + diphosphate. It catalyses the reaction 4-methyl-5-(2-phosphooxyethyl)-thiazole + 4-amino-2-methyl-5-(diphosphooxymethyl)pyrimidine + H(+) = thiamine phosphate + diphosphate. The protein operates within cofactor biosynthesis; thiamine diphosphate biosynthesis; thiamine phosphate from 4-amino-2-methyl-5-diphosphomethylpyrimidine and 4-methyl-5-(2-phosphoethyl)-thiazole: step 1/1. In terms of biological role, condenses 4-methyl-5-(beta-hydroxyethyl)thiazole monophosphate (THZ-P) and 2-methyl-4-amino-5-hydroxymethyl pyrimidine pyrophosphate (HMP-PP) to form thiamine monophosphate (TMP). This chain is Thiamine-phosphate synthase, found in Methanococcus vannielii (strain ATCC 35089 / DSM 1224 / JCM 13029 / OCM 148 / SB).